A 343-amino-acid polypeptide reads, in one-letter code: Flap endonuclease 1 (343 aa).

Positions 1-98 are N-domain; the sequence is MGVPIGELIP…KELEKRREAR (98 aa). Residues Asp27, Asp80, Glu152, Glu154, Asp173, Asp175, and Asp236 each coordinate Mg(2+). The interval 116–258 is I-domain; that stretch reads EARKYAQRAT…KALEIVKYSK (143 aa). An interaction with PCNA region spans residues 330–338; the sequence is KQSTLESWF.

This sequence belongs to the XPG/RAD2 endonuclease family. FEN1 subfamily. In terms of assembly, interacts with PCNA. PCNA stimulates the nuclease activity without altering cleavage specificity. Mg(2+) is required as a cofactor.

Functionally, structure-specific nuclease with 5'-flap endonuclease and 5'-3' exonuclease activities involved in DNA replication and repair. During DNA replication, cleaves the 5'-overhanging flap structure that is generated by displacement synthesis when DNA polymerase encounters the 5'-end of a downstream Okazaki fragment. Binds the unpaired 3'-DNA end and kinks the DNA to facilitate 5' cleavage specificity. Cleaves one nucleotide into the double-stranded DNA from the junction in flap DNA, leaving a nick for ligation. Also involved in the base excision repair (BER) pathway. Acts as a genome stabilization factor that prevents flaps from equilibrating into structures that lead to duplications and deletions. Also possesses 5'-3' exonuclease activity on nicked or gapped double-stranded DNA. This is Flap endonuclease 1 from Pyrococcus abyssi (strain GE5 / Orsay).